A 309-amino-acid chain; its full sequence is Coenzyme PQQ synthesis protein B (309 aa).

This sequence belongs to the PqqB family.

Its pathway is cofactor biosynthesis; pyrroloquinoline quinone biosynthesis. In terms of biological role, may be involved in the transport of PQQ or its precursor to the periplasm. This Bradyrhizobium diazoefficiens (strain JCM 10833 / BCRC 13528 / IAM 13628 / NBRC 14792 / USDA 110) protein is Coenzyme PQQ synthesis protein B.